The chain runs to 187 residues: Calcium and integrin-binding family member 3 (187 aa).

EF-hand domains follow at residues 66-101 (KDNPFRQRIAQVFSEDGDGHMTLDNFLDMFSVMSEM), 103-138 (PRDLKAYYAFKIYDFNNDDYICAWDLEQTVTKLTRG), and 144-179 (EVSLVCEKVLDEADGDHDGRLSLEDFQNMILRAPDF). Ca(2+) is bound by residues Asp-116, Asn-118, Asp-120, Tyr-122, Asp-127, Asp-157, Asp-159, Asp-161, Arg-163, and Asp-168.

In terms of assembly, monomer and homodimer. Interacts with ITGA2B (via C-terminus cytoplasmic tail region); the interaction is stabilized/increased in a calcium and magnesium-dependent manner. Interacts with TMC1.

Acts a an auxiliary subunit of the sensory mechanoelectrical transduction (MET) channel in hair cells. Plays a role in regulating hair cell MET channel localization and function. This Homo sapiens (Human) protein is Calcium and integrin-binding family member 3 (CIB3).